We begin with the raw amino-acid sequence, 462 residues long: uncharacterized protein (462 aa).

A disordered region spans residues 405–462; the sequence is QPIGNNKSSPMKREFTAMEEDKTETGDIFKLLSQQKPAKGAKSKSKKYKKTEEDLSAV. Positions 415-431 are enriched in basic and acidic residues; that stretch reads MKREFTAMEEDKTETGD. Positions 443-453 are enriched in basic residues; sequence KGAKSKSKKYK.

This is an uncharacterized protein from Magallana gigas (Pacific oyster).